A 241-amino-acid polypeptide reads, in one-letter code: Lipoprotein-releasing system ATP-binding protein LolD 2 (241 aa).

The ABC transporter domain occupies 6–241 (LDAQQLSKSY…YKSYEKSTAV (236 aa)). 43–50 (GASGSGKT) contributes to the ATP binding site.

It belongs to the ABC transporter superfamily. Lipoprotein translocase (TC 3.A.1.125) family. The complex is composed of two ATP-binding proteins (LolD) and two transmembrane proteins (LolC and LolE).

The protein localises to the cell inner membrane. In terms of biological role, part of the ABC transporter complex LolCDE involved in the translocation of mature outer membrane-directed lipoproteins, from the inner membrane to the periplasmic chaperone, LolA. Responsible for the formation of the LolA-lipoprotein complex in an ATP-dependent manner. The protein is Lipoprotein-releasing system ATP-binding protein LolD 2 of Chlorobium chlorochromatii (strain CaD3).